Reading from the N-terminus, the 673-residue chain is Citrate exporter 1 (673 aa).

Residues 1-44 (MFNLNTKSSKEPEVTEVAVDSTPSSPVTRESSPESSPDNSAVDL) form a disordered region. Over residues 21-39 (STPSSPVTRESSPESSPDN) the composition is skewed to polar residues. Residues 67–87 (FLVFGAMAFCMLVSFMDQNGI) traverse the membrane as a helical segment. Asparagine 99 is a glycosylation site (N-linked (GlcNAc...) asparagine). Transmembrane regions (helical) follow at residues 103–123 (TISW…VLYG), 133–153 (LVFM…ACAQ), 164–184 (FSGI…SDIV), and 194–214 (GILG…GAAF). Asparagine 217 carries N-linked (GlcNAc...) asparagine glycosylation. Transmembrane regions (helical) follow at residues 222–242 (AIFY…FFIL), 261–281 (PGLF…AGGG), 292–312 (ISML…EGFF), 322–342 (IFGT…GIAY), 364–384 (AAGM…ISGQ), 393–413 (LEVI…KCFW), 419–439 (MALL…CFQP), and 465–485 (SFGG…SLKA). The N-linked (GlcNAc...) asparagine glycan is linked to asparagine 526. A helical transmembrane segment spans residues 529-549 (HTVFVFLCPIVGACLLVTVFV). The segment covering 564-596 (AKTVEDKDKDESGTDCEDMTKGEVLVSEKEGKL) has biased composition (basic and acidic residues). 2 disordered regions span residues 564–608 (AKTV…MHFG) and 636–673 (FPPM…IQEE). Asparagine 599 and asparagine 662 each carry an N-linked (GlcNAc...) asparagine glycan.

This sequence belongs to the major facilitator superfamily.

It is found in the cell membrane. The catalysed reaction is citrate(in) = citrate(out). Its function is as follows. Transmembrane transporter that exports citrate across the cell membrane. The polypeptide is Citrate exporter 1 (Yarrowia lipolytica (strain CLIB 122 / E 150) (Yeast)).